The chain runs to 654 residues: MLLRPNSGNTLKYGCLLTKRWLTTSKLLYSVEDMKIKIGQEQYRKALEERIDKIPIENYRNFSIVAHVDHGKSTLSDRLLEMTGVIKPGSKSQVLDKLDVERERGITVKAQTVSMFYNDGKQDYLLHLVDTPGHVDFRAEVSRSYASCGGALLLVDASQGVQAQTVANFYLAYSMGLKLIPIINKIDLDSANIPGAREQIETTFELDPNECIPVSAKTGLNVEQIIPSVIKNIPSPVCDVNKPLRALLVDSWHDPYVGVVMLVHIVDGRMKKGMKILSAHTNRTYDVKEVGIMYPDRTPTSFIKAGQVAYIIPGMKNPREALVGDTFYQMGKHEGLEPLPGFEEPKPMVFVGAFPADGKEFNAMDDQMQNLVLNDRSVTLEQKTSNALGLGWRLGFLGSLHASVFKERLEKEYGAKIILTAPTVPYKIIYKNGEEKIVTNPDDFPDNQKHHDVESYMEPYVEAIMTVPNEYVGNVMTLCLNNRGEQKEIEYLTTGQVLLKYEIPTSQLVEDFFGKLKGCTKGYASLDYEEAGYRKSDIVKMQLCVNGEPQDALTTVIHRSQAQARGKEYVTRFKKFLSYQLLKVPISLKIIQKVVARETIKAKRKDVTQRLHAADISRYKKLLERQKEGKKQMKLSGRVTIKNDAYQAFLRRED.

Residues 57 to 237 (ENYRNFSIVA…SVIKNIPSPV (181 aa)) form the tr-type G domain. GTP is bound by residues 66–73 (AHVDHGKS), 130–134 (DTPGH), and 184–187 (NKID).

Belongs to the TRAFAC class translation factor GTPase superfamily. Classic translation factor GTPase family. LepA subfamily.

Its subcellular location is the mitochondrion inner membrane. The enzyme catalyses GTP + H2O = GDP + phosphate + H(+). Functionally, promotes mitochondrial protein synthesis. May act as a fidelity factor of the translation reaction, by catalyzing a one-codon backward translocation of tRNAs on improperly translocated ribosomes. Binds to mitochondrial ribosomes in a GTP-dependent manner. In Candida albicans (strain WO-1) (Yeast), this protein is Translation factor GUF1, mitochondrial.